An 873-amino-acid polypeptide reads, in one-letter code: DNA mismatch repair protein MutS (873 aa).

625-632 (GPNMGGKS) is a binding site for ATP.

Belongs to the DNA mismatch repair MutS family.

In terms of biological role, this protein is involved in the repair of mismatches in DNA. It is possible that it carries out the mismatch recognition step. This protein has a weak ATPase activity. The polypeptide is DNA mismatch repair protein MutS (Xanthomonas euvesicatoria pv. vesicatoria (strain 85-10) (Xanthomonas campestris pv. vesicatoria)).